Reading from the N-terminus, the 204-residue chain is N-alpha-acetyltransferase 40 (204 aa).

Residues glutamate 39–lysine 202 enclose the N-acetyltransferase domain. Residues tyrosine 64, threonine 107–glutamate 109, and tyrosine 118 each bind substrate. Residues isoleucine 120–leucine 122 and glycine 128–lysine 133 each bind acetyl-CoA. Position 154 (threonine 154) interacts with substrate. Residue asparagine 159 coordinates acetyl-CoA. Substrate is bound at residue serine 176.

Belongs to the acetyltransferase family. NAA40 subfamily.

It is found in the cytoplasm. The protein localises to the nucleus. It carries out the reaction N-terminal L-seryl-[histone H4] + acetyl-CoA = N-terminal N(alpha)-acetyl-L-seryl-[histone H4] + CoA + H(+). The catalysed reaction is N-terminal L-seryl-[histone H2A] + acetyl-CoA = N-terminal N(alpha)-acetyl-L-seryl-[histone H2A] + CoA + H(+). N-alpha-acetyltransferase that specifically mediates the acetylation of the N-terminal residues of histones H4 and H2A. The sequence is that of N-alpha-acetyltransferase 40 from Schizosaccharomyces pombe (strain 972 / ATCC 24843) (Fission yeast).